The sequence spans 68 residues: Palustrin-1c (68 aa).

The first 22 residues, 1–22, serve as a signal peptide directing secretion; sequence MFTMKKSLLLLFFLGTISLSLC. A propeptide spanning residues 23–39 is cleaved from the precursor; it reads EEERGADEEEGDGEKLT. An intrachain disulfide couples C62 to C68.

As to expression, expressed by the skin glands.

The protein resides in the secreted. In terms of biological role, antimicrobial peptide. This Odorrana versabilis (Chinese bamboo leaf odorous frog) protein is Palustrin-1c.